A 371-amino-acid polypeptide reads, in one-letter code: MPHHYILTLFGLLPVATNISTWWNFGSMLLTCLALQVLTGFFLAIHYTANINLAFSSIIHITRDVPYGWMMQNLHAIGASMFFICIYIHIARGLYYGSYLNKETWMSGITLLITLMATAFFGYVLPWGQMSFWAATVITNLLTAVPYLGXSLTTWLWGGFAINDPTLTRFFALHFILPFAIISLSSLHIILLHEEGSSNPLGTNPDIDKIPFHPYHSHKDLLLLTFMILLLFTIVSFLPDIFNDPDNFSKANPLVTPQHIKPEWYFLFAYGILRSIPNKLGGALALVMSIMILFIIPFTHTARLRPMTFRPLSQLMFWTLVSTFATITWAATKPVEPPFIIISQTTSMLYFTFFLSTPILGWMENKMMNIS.

Transmembrane regions (helical) follow at residues phenylalanine 25–isoleucine 45, tryptophan 69–isoleucine 90, tryptophan 105–leucine 125, and phenylalanine 170–isoleucine 190. The heme b site is built by histidine 75 and histidine 89. Heme b is bound by residues histidine 174 and histidine 188. Histidine 193 is an a ubiquinone binding site. Helical transmembrane passes span histidine 218–leucine 238, leucine 280–histidine 300, leucine 312–threonine 332, and phenylalanine 339–proline 358.

The protein belongs to the cytochrome b family. As to quaternary structure, the cytochrome bc1 complex contains 3 respiratory subunits (MT-CYB, CYC1 and UQCRFS1), 2 core proteins (UQCRC1 and UQCRC2) and probably 6 low-molecular weight proteins. It depends on heme b as a cofactor.

Its subcellular location is the mitochondrion inner membrane. Component of the ubiquinol-cytochrome c reductase complex (complex III or cytochrome b-c1 complex) that is part of the mitochondrial respiratory chain. The b-c1 complex mediates electron transfer from ubiquinol to cytochrome c. Contributes to the generation of a proton gradient across the mitochondrial membrane that is then used for ATP synthesis. The sequence is that of Cytochrome b (MT-CYB) from Antaresia maculosa (Eastern small blotched python).